The sequence spans 289 residues: ATP synthase gamma chain (289 aa).

This sequence belongs to the ATPase gamma chain family. In terms of assembly, F-type ATPases have 2 components, CF(1) - the catalytic core - and CF(0) - the membrane proton channel. CF(1) has five subunits: alpha(3), beta(3), gamma(1), delta(1), epsilon(1). CF(0) has three main subunits: a, b and c.

It localises to the cell inner membrane. In terms of biological role, produces ATP from ADP in the presence of a proton gradient across the membrane. The gamma chain is believed to be important in regulating ATPase activity and the flow of protons through the CF(0) complex. This chain is ATP synthase gamma chain, found in Acinetobacter baylyi (strain ATCC 33305 / BD413 / ADP1).